A 216-amino-acid polypeptide reads, in one-letter code: Protein Syd (216 aa).

This sequence belongs to the Syd family.

Its subcellular location is the cell inner membrane. Its function is as follows. Interacts with the SecY protein in vivo. May bind preferentially to an uncomplexed state of SecY, thus functioning either as a chelating agent for excess SecY in the cell or as a regulatory factor that negatively controls the translocase function. The protein is Protein Syd of Shewanella sp. (strain W3-18-1).